Reading from the N-terminus, the 527-residue chain is Glutamate--cysteine ligase (527 aa).

This sequence belongs to the glutamate--cysteine ligase type 1 family. Type 1 subfamily.

It catalyses the reaction L-cysteine + L-glutamate + ATP = gamma-L-glutamyl-L-cysteine + ADP + phosphate + H(+). Its pathway is sulfur metabolism; glutathione biosynthesis; glutathione from L-cysteine and L-glutamate: step 1/2. The sequence is that of Glutamate--cysteine ligase from Pseudomonas paraeruginosa (strain DSM 24068 / PA7) (Pseudomonas aeruginosa (strain PA7)).